The primary structure comprises 379 residues: UPF0754 membrane protein ABC1518 (379 aa).

Transmembrane regions (helical) follow at residues 1–21 (MHWIWLVLLLAVVGAIVGAAT) and 358–378 (LLGGLIGGIVGLIQAVIVHFF).

This sequence belongs to the UPF0754 family.

The protein localises to the cell membrane. The sequence is that of UPF0754 membrane protein ABC1518 from Shouchella clausii (strain KSM-K16) (Alkalihalobacillus clausii).